We begin with the raw amino-acid sequence, 290 residues long: UPF0761 membrane protein YihY (290 aa).

The next 6 helical transmembrane spans lie at 44-64 (LLSLVPLVAVVFALFAAFPMF), 104-124 (VGACGLIVTALLLMYSIDSAL), 140-160 (FAVYWMILTLGPLLAGASLAI), 183-203 (IFPLLLSWISFWLLYSIVPTI), 210-230 (AIVGAFVAALLFEAGKKGFAL), and 244-264 (VLAVIPILFVWVYWTWCIVLL).

It belongs to the UPF0761 family.

Its subcellular location is the cell inner membrane. In Escherichia coli O139:H28 (strain E24377A / ETEC), this protein is UPF0761 membrane protein YihY.